The chain runs to 268 residues: M1-specific T cell receptor alpha chain (268 aa).

The signal sequence occupies residues 1 to 19; the sequence is MVLKFSVSILWIQLAWVST. The region spanning 20-107 is the Ig-like V-type domain; the sequence is QLLEQSPQFL…QPGDTGLYLC (88 aa). The t cell receptor alpha variable 27 stretch occupies residues 20 to 109; the sequence is QLLEQSPQFL…GDTGLYLCAG (90 aa). N-linked (GlcNAc...) asparagine glycans are attached at residues Asn36 and Asn42. An intrachain disulfide couples Cys41 to Cys107. A CDR1 region spans residues 45–49; the sequence is SVFSS. Residues 67–69 are CDR2; that stretch reads VVT. A CDR3 region spans residues 107–118; that stretch reads CAGGGSQGNLIF. A t cell receptor alpha joining 42 region spans residues 110–128; it reads GGSQGNLIFGKGTKLSVKP. The tract at residues 129–268 is t cell receptor alpha constant; sequence IQNPDPAVYQ…LLMTLRLWSS (140 aa). Residues 147 to 235 enclose the Ig-like C1-type domain; the sequence is KSVCLFTDFD…LVEKSFETDT (89 aa). A disulfide bond links Cys150 and Cys200. 4 N-linked (GlcNAc...) asparagine glycosylation sites follow: Asn160, Asn194, Asn205, and Asn241. Residues 222–243 are connecting peptide; it reads CDVKLVEKSFETDTNLNFQNLS. Residues 244–266 traverse the membrane as a helical segment; that stretch reads VIGFRILLLKVAGFNLLMTLRLW. Residues 267-268 lie on the Cytoplasmic side of the membrane; it reads SS.

In terms of assembly, disulfide-linked heterodimer with TRBV19*01J2S7*01C*02 beta chain. The TR primarily interacts via its CDR3-beta domain with M/matrix protein 1-derived peptide (GILGFVFTL) displayed by HLA-A*02.01 in a 'peg-notch' recognition mode. The alpha-beta TR associates with the transmembrane signaling CD3 coreceptor proteins to form the TR-CD3 (TCR). The assembly of alpha-beta TR heterodimers with CD3 occurs in the endoplasmic reticulum where a single alpha-beta TR heterodimer associates with one CD3D-CD3E heterodimer, one CD3G-CD3E heterodimer and one CD247 homodimer forming a stable octameric structure. CD3D-CD3E and CD3G-CD3E heterodimers preferentially associate with TR alpha and TR beta chains (via TM domain), respectively. The association of the CD247 homodimer is the last step of TCR assembly in the endoplasmic reticulum and is required for transport to the cell surface. In terms of tissue distribution, expressed in M/matrix protein 1-specific effector and memory CD8-positive T cells readily detectable in the peripheral blood, secondary lymphoid organs and lung (primary site of infection) of IAV infected individuals.

Its subcellular location is the cell membrane. Functionally, the alpha chain of TRAV27*01J42*01C*01/TRBV19*01J2S7*01C*02 alpha-beta T cell receptor (TR) clonotype that is specific for HLA-A*02:01-restricted M/matrix protein 1 immunodominant epitope GILGFVFTL of influenza A virus (IAV). Classified as a public TR clonotype, it is preferentially selected in effector memory CD8-positive T cells among multiple HLA-A*02:01 carriers and confers long-lived immunity against IAV infection. Can cross-recognize sporadically emerging IAV variants by molecular mimicry, inducing immunity toward different influenza strains. Antigen recognition initiates TR-CD3 clustering on the cell surface and intracellular activation of LCK that phosphorylates the ITAM motifs of CD3G, CD3D, CD3E and CD247 enabling the recruitment of ZAP70. In turn, ZAP70 phosphorylates LAT, which recruits numerous signaling molecules to form the LAT signalosome. The LAT signalosome propagates signal branching to three major signaling pathways, the calcium, the mitogen-activated protein kinase (MAPK) kinase and the nuclear factor NF-kappa-B (NF-kB) pathways, leading to the mobilization of transcription factors that are critical for gene expression and essential for T cell differentiation into effector/memory T cells. This is M1-specific T cell receptor alpha chain from Homo sapiens (Human).